Reading from the N-terminus, the 289-residue chain is MTKNSENNLWYIWINGELVPYELATVHALTHSLHYSGSVFEGERAYNGKVFKLKEHTERLVKSAEVLGLKVPYNVEEIIKAHELLIEKNKIQDAYIRPLVWCGSESLNIINPKLSTNVLIAAVPSMPRAFAAGFNLYVSRWRKAAPNMMPVQSKSAAHYNMAITSKKEAKDLGYDDALLLDYEGYIAECTTTNIFFVKDNVLYTPIADRFLDGITRQTIIEIAKNLGLEVKEERLKLEQIEDFISCFATGTAIEVQNINSIDIGNKKVIFNDHKIADVLKEEYGKIVRG.

An N6-(pyridoxal phosphate)lysine modification is found at K154.

This sequence belongs to the class-IV pyridoxal-phosphate-dependent aminotransferase family. Pyridoxal 5'-phosphate serves as cofactor.

The catalysed reaction is L-leucine + 2-oxoglutarate = 4-methyl-2-oxopentanoate + L-glutamate. It carries out the reaction L-isoleucine + 2-oxoglutarate = (S)-3-methyl-2-oxopentanoate + L-glutamate. It catalyses the reaction L-valine + 2-oxoglutarate = 3-methyl-2-oxobutanoate + L-glutamate. The protein operates within amino-acid biosynthesis; L-isoleucine biosynthesis; L-isoleucine from 2-oxobutanoate: step 4/4. It participates in amino-acid biosynthesis; L-leucine biosynthesis; L-leucine from 3-methyl-2-oxobutanoate: step 4/4. Its pathway is amino-acid biosynthesis; L-valine biosynthesis; L-valine from pyruvate: step 4/4. Functionally, acts on leucine, isoleucine and valine. This chain is Probable branched-chain-amino-acid aminotransferase (ilvE), found in Rickettsia bellii (strain RML369-C).